Here is a 213-residue protein sequence, read N- to C-terminus: Orotate phosphoribosyltransferase (213 aa).

Position 26 (lysine 26) interacts with 5-phospho-alpha-D-ribose 1-diphosphate. 34–35 contacts orotate; it reads FF. 5-phospho-alpha-D-ribose 1-diphosphate contacts are provided by residues 72–73, arginine 99, lysine 100, lysine 103, histidine 105, and 124–132; these read YK and DDVITAGTA. Residues threonine 128 and arginine 156 each coordinate orotate.

It belongs to the purine/pyrimidine phosphoribosyltransferase family. PyrE subfamily. Homodimer. The cofactor is Mg(2+).

The enzyme catalyses orotidine 5'-phosphate + diphosphate = orotate + 5-phospho-alpha-D-ribose 1-diphosphate. Its pathway is pyrimidine metabolism; UMP biosynthesis via de novo pathway; UMP from orotate: step 1/2. In terms of biological role, catalyzes the transfer of a ribosyl phosphate group from 5-phosphoribose 1-diphosphate to orotate, leading to the formation of orotidine monophosphate (OMP). This Vibrio parahaemolyticus serotype O3:K6 (strain RIMD 2210633) protein is Orotate phosphoribosyltransferase.